We begin with the raw amino-acid sequence, 137 residues long: Large-conductance mechanosensitive channel (137 aa).

A run of 2 helical transmembrane segments spans residues Phe10 to Gly30 and Gly76 to Ile96.

The protein belongs to the MscL family. In terms of assembly, homopentamer.

The protein resides in the cell inner membrane. In terms of biological role, channel that opens in response to stretch forces in the membrane lipid bilayer. May participate in the regulation of osmotic pressure changes within the cell. The sequence is that of Large-conductance mechanosensitive channel from Salmonella choleraesuis (strain SC-B67).